The sequence spans 246 residues: MSDSQDKNYISFEKTEIGQIVSEAPAEKYVSFQKKYFNRLTIIGDSITQKGFTPGGYCAELMNFYQRRLRVDVWGFSGYTSRHVLRYLPEIPLEIDSTKLLIVFLGTNDCQLTETGYMCPVDEFKNNLLALTRPFPHSKIIIVSPGICTKDICFKREQEPYVIAASETVNTLNKSKANSAGLINLYEITKSYPTPELLFTDGLHFSSLGYSLLFNEIVATISKAWPELLPNNLPLQFPHWSEILFT.

The active-site Nucleophile is Ser-46. The Proton donor role is filled by Asp-201. The active-site Proton acceptor is His-204.

This sequence belongs to the 'GDSL' lipolytic enzyme family. IAH1 subfamily.

Its subcellular location is the cytoplasm. The catalysed reaction is 3-methylbutyl acetate + H2O = 3-methylbutanol + acetate + H(+). This Schizosaccharomyces pombe (strain 972 / ATCC 24843) (Fission yeast) protein is Isoamyl acetate-hydrolyzing esterase (iah1).